The following is a 549-amino-acid chain: Mitochondrial hydroperoxide bicyclase CYP50918A1 (549 aa).

The disordered stretch occupies residues Met-1–Leu-75. Residues Ser-8–Pro-26 show a composition bias toward basic and acidic residues. Over residues Ala-27–Pro-41 the composition is skewed to low complexity. Cys-491 contributes to the heme binding site. The tract at residues Asp-528–His-549 is disordered.

The protein belongs to the cytochrome P450 family. Requires heme as cofactor.

Its subcellular location is the mitochondrion. It catalyses the reaction (13S)-hydroperoxy-(9Z,11E,15Z)-octadecatrienoate = plasmodiophorol A. It carries out the reaction (13S)-hydroperoxy-(9Z,11E,15Z)-octadecatrienoate = plasmodiophorol B. Its pathway is lipid metabolism; oxylipin biosynthesis. Its function is as follows. Cytochrome P450 hydroperoxide bicyclase involved in the metabolism of oxylipins natural products such as egregiachlorides, hybridalactone, ecklonialactones and related bicyclic oxylipins. Isomerizes the hydroperoxides into epoxyalcohols via epoxyallylic radical. Can use alpha-linolenic 13-hydroperoxide ((9Z,11E,13S,15Z)-13-hydroperoxy-9,11,15-octadecatrienoic, 13-HPOT) as preferred substrate to produce the heterobicyclic oxylipins plasmodiophorol A (6-oxabicyclo[3.1.0]hexane) and plasmodiophorol B (2-oxabicyclo[2.2.1]heptane) at the ratio 12:1 and a minor product plasmodiophorol C (cyclopentanediol) formed through the hydrolysis of plasmodiophorols A and B and, to a lower extent, active with linoleic acid 13-hydroperoxide ((9Z,11E,13S)-13-hydroperoxy-9,11-octadecadienoic, 13-HPOD), linoleic acid 9-hydroperoxide ((9S,10E,12Z)-9-hydroperoxy-10,12-octadecadienoic, 9-HPOD) and alpha-linolenic 9-hydroperoxide ((9S,10E,12Z,15Z)-9-hydroperoxy-10,12,15-octadecatrienoic, 9-HPOT). This Plasmodiophora brassicae (Clubroot disease agent) protein is Mitochondrial hydroperoxide bicyclase CYP50918A1.